Reading from the N-terminus, the 342-residue chain is MAEYDHYEDNGFNSFNDSSQEEHQDFLQFSKVFLPCMYLVVFVCGLVGNSLVLVISIFYHKLQSLTDVFLVNLPLADLVFVCTLPFWAYAGIHEWIFGQVMCKTLLGIYTINFYTSMLILTCITVDRFIVVVKATKAYNQQAKKMTWGKVICLLIWVISLLVSLPQIIYGNVFNLDKLICGYHDEEISTVVLATQMTLGFFLPLLAMIVCYSVIIKTLLHAGGFQKHRSLKIIFLVMAVFLLTQTPFNLVKLIRSTHWEYYAMTSFHYTIIVTEAIAYLRACLNPVLYAFVSLKFRKNFWKLVKDIGCLPYLGVSHQWKSSEDNSKTFSASHNVEATSMFQL.

At 1 to 32 the chain is on the extracellular side; sequence MAEYDHYEDNGFNSFNDSSQEEHQDFLQFSKV. N-linked (GlcNAc...) asparagine glycosylation occurs at asparagine 16. The helical transmembrane segment at 33–59 threads the bilayer; it reads FLPCMYLVVFVCGLVGNSLVLVISIFY. The Cytoplasmic segment spans residues 60-68; that stretch reads HKLQSLTDV. The chain crosses the membrane as a helical span at residues 69 to 89; sequence FLVNLPLADLVFVCTLPFWAY. Residues 90 to 103 lie on the Extracellular side of the membrane; sequence AGIHEWIFGQVMCK. Cysteine 102 and cysteine 180 are disulfide-bonded. The helical transmembrane segment at 104 to 125 threads the bilayer; sequence TLLGIYTINFYTSMLILTCITV. The Cytoplasmic segment spans residues 126 to 143; the sequence is DRFIVVVKATKAYNQQAK. A helical transmembrane segment spans residues 144–164; it reads KMTWGKVICLLIWVISLLVSL. Residues 165–187 are Extracellular-facing; it reads PQIIYGNVFNLDKLICGYHDEEI. The helical transmembrane segment at 188–215 threads the bilayer; the sequence is STVVLATQMTLGFFLPLLAMIVCYSVII. At 216–231 the chain is on the cytoplasmic side; that stretch reads KTLLHAGGFQKHRSLK. Residues 232–259 form a helical membrane-spanning segment; that stretch reads IIFLVMAVFLLTQTPFNLVKLIRSTHWE. At 260–275 the chain is on the extracellular side; sequence YYAMTSFHYTIIVTEA. The chain crosses the membrane as a helical span at residues 276 to 293; sequence IAYLRACLNPVLYAFVSL. Residues 294 to 342 are Cytoplasmic-facing; sequence KFRKNFWKLVKDIGCLPYLGVSHQWKSSEDNSKTFSASHNVEATSMFQL.

The protein belongs to the G-protein coupled receptor 1 family.

It localises to the cell membrane. In terms of biological role, receptor for the C-X-C chemokine CXCL16. Used as a coreceptor by SIVs and by strains of HIV-2 and m-tropic HIV-1. The polypeptide is C-X-C chemokine receptor type 6 (CXCR6) (Chlorocebus aethiops (Green monkey)).